The primary structure comprises 96 residues: MEQPPEDQGPQREPYNEWTLELLEELKNEAVRHFPREYLHGLGQYIYNTYGDTWRGVETMIRILQQLLFIHFRIGCHHSRIGIIRQRRLRNGSSRS.

The tract at residues M1–L42 is homooligomerization. Phosphoserine; by host is present on residues S79, S94, and S96.

It belongs to the HIV-1 VPR protein family. In terms of assembly, homooligomer, may form homodimer. Interacts with p6-gag region of the Pr55 Gag precursor protein through a (Leu-X-X)4 motif near the C-terminus of the P6gag protein. Interacts with host UNG. May interact with host RAD23A/HHR23A. Interacts with host VPRBP/DCAF1, leading to hijack the CUL4A-RBX1-DDB1-DCAF1/VPRBP complex, mediating ubiquitination of host proteins such as TERT and ZGPAT and arrest of the cell cycle in G2 phase. Phosphorylated on several residues by host. These phosphorylations regulate VPR activity for the nuclear import of the HIV-1 pre-integration complex.

The protein resides in the virion. Its subcellular location is the host nucleus. It localises to the host extracellular space. Functionally, during virus replication, may deplete host UNG protein, and incude G2-M cell cycle arrest. Acts by targeting specific host proteins for degradation by the 26S proteasome, through association with the cellular CUL4A-DDB1 E3 ligase complex by direct interaction with host VPRPB/DCAF-1. Cell cycle arrest reportedly occurs within hours of infection and is not blocked by antiviral agents, suggesting that it is initiated by the VPR carried into the virion. Additionally, VPR induces apoptosis in a cell cycle dependent manner suggesting that these two effects are mechanistically linked. Detected in the serum and cerebrospinal fluid of AIDS patient, VPR may also induce cell death to bystander cells. In terms of biological role, during virus entry, plays a role in the transport of the viral pre-integration (PIC) complex to the host nucleus. This function is crucial for viral infection of non-dividing macrophages. May act directly at the nuclear pore complex, by binding nucleoporins phenylalanine-glycine (FG)-repeat regions. The protein is Protein Vpr of Homo sapiens (Human).